The chain runs to 540 residues: Probable protein kinase UbiB (540 aa).

A helical membrane pass occupies residues 24 to 44 (LLFEQPLLPWWLASLRLLMPW). The Protein kinase domain occupies 126–494 (RFDVEPLASA…RRRQGDRWAL (369 aa)). ATP-binding positions include 132–140 (LASASVAQV) and lysine 154. Aspartate 289 functions as the Proton acceptor in the catalytic mechanism. 2 consecutive transmembrane segments (helical) span residues 496–516 (LLGA…AEAA) and 518–538 (LAAP…YLIV).

This sequence belongs to the ABC1 family. UbiB subfamily.

The protein resides in the cell inner membrane. The protein operates within cofactor biosynthesis; ubiquinone biosynthesis [regulation]. Is probably a protein kinase regulator of UbiI activity which is involved in aerobic coenzyme Q (ubiquinone) biosynthesis. The chain is Probable protein kinase UbiB from Pseudomonas putida (strain GB-1).